The sequence spans 220 residues: MMQELKILNEKRAEIYWWLSSLFFKELSEQDIARYHSAEVRTFLSGLADEQSLNREVKHLVEALNRLQNRQDAQLELAADFCDLFLKSDRDSALPYASVYTDKGLLNGKPAQQMRELLGAHGVKVEQNLNEPEDHLAIQLDFLAHLAISANQIEHSAQLSSALQAQSDFISQHLLTWLPAFAERCTQFDAFGLYSAAARLALAFIQQDKHCLDELFQETH.

Belongs to the TorD/DmsD family. TorD subfamily.

Its subcellular location is the cytoplasm. Functionally, involved in the biogenesis of TorA. Acts on TorA before the insertion of the molybdenum cofactor and, as a result, probably favors a conformation of the apoenzyme that is competent for acquiring the cofactor. This is Chaperone protein TorD from Vibrio cholerae serotype O1 (strain ATCC 39315 / El Tor Inaba N16961).